Here is a 271-residue protein sequence, read N- to C-terminus: Putative two-component membrane permease complex subunit SMU_746c (271 aa).

The next 2 helical transmembrane spans lie at 34-54 (LAYI…TIWM) and 70-90 (FFSP…PTVP).

This sequence belongs to the UPF0703 family. In terms of assembly, interacts with SMU_747c.

It localises to the cell membrane. Could be part of a two-component membrane permease system responsible for amino acid transport under low pH. Involved in acidogenesis, biofilm formation and low-pH survival. This Streptococcus mutans serotype c (strain ATCC 700610 / UA159) protein is Putative two-component membrane permease complex subunit SMU_746c.